The sequence spans 246 residues: Probable transcriptional regulatory protein YebC (246 aa).

The interval 1-20 (MAGHSKWANTRHRKAAQDAK) is disordered.

The protein belongs to the TACO1 family.

It localises to the cytoplasm. The polypeptide is Probable transcriptional regulatory protein YebC (Shigella boydii serotype 4 (strain Sb227)).